We begin with the raw amino-acid sequence, 536 residues long: Heparanase (536 aa).

Positions 1–28 (MLRPLLLLWLWGRLGALTQGTPAGTAPT) are cleaved as a signal peptide. Heparan sulfate group is bound by residues 55–57 (DAS) and T90. A propeptide spans 103–150 (PTSEERSYWQSQDNNDICGSERVSADVLRKLQMEWPFQELLLLREQYQ) (linker peptide). Residues C120 and C172 are joined by a disulfide bond. 151–155 (REFKN) serves as a coordination point for heparan sulfate group. N-linked (GlcNAc...) asparagine glycosylation is found at N155, N193, and N210. The active-site Proton donor is E218. Residues 263-273 (QPRGKTVKLLR), H289, and R296 contribute to the heparan sulfate group site. The required for heterodimerization with the heparanase 8 kDa subunit stretch occupies residues 281–410 (EVIDSLTWHH…LLFKKLVGPK (130 aa)). E336 acts as the Nucleophile in catalysis. Residues 341 to 343 (YGG) and 382 to 384 (GNY) contribute to the heparan sulfate group site. The cysteines at positions 430 and 535 are disulfide-linked. N452 carries an N-linked (GlcNAc...) asparagine glycan. The interval 520–536 (FSYGFFVIRNAKIAACI) is required for transferring proheparanase to the Golgi apparatus, secretion and subsequent enzyme activity and for enhancement of PKB/AKT1 phosphorylation.

It belongs to the glycosyl hydrolase 79 family. Heterodimer; heterodimer formation between the 8 kDa and the 50 kDa subunits is required for enzyme activity. Interacts with TF; the interaction, inhibited by heparin, enhances the generation of activated factor X and activates coagulation. Interacts with HRG; the interaction is enhanced at acidic pH, partially inhibits binding of HPSE to cell surface receptors and modulates its enzymatic activity. Interacts with SDC1; the interaction enhances the shedding of SDC1. Interacts with HPSE2. Post-translationally, proteolytically processed. The cleavage of the 65 kDa form leads to the generation of a linker peptide, and the 8 kDa and 50 kDa products. The active form, the 8/50 kDa heterodimer, is resistant to degradation. Complete removal of the linker peptide appears to be a prerequisite to the complete activation of the enzyme. N-glycosylated. Glycosylation of the 50 kDa subunit appears to be essential for its solubility.

Its subcellular location is the lysosome membrane. The protein localises to the secreted. It localises to the nucleus. The catalysed reaction is endohydrolysis of (1-&gt;4)-beta-D-glycosidic bonds of heparan sulfate chains in heparan sulfate proteoglycan.. Inhibited by laminarin sulfate and, to a lower extent, by heparin and sulfamin. Activated by calcium and magnesium. Inhibited by EDTA. Functionally, endoglycosidase that cleaves heparan sulfate proteoglycans (HSPGs) into heparan sulfate side chains and core proteoglycans. Participates in extracellular matrix (ECM) degradation and remodeling. Selectively cleaves the linkage between a glucuronic acid unit and an N-sulfo glucosamine unit carrying either a 3-O-sulfo or a 6-O-sulfo group. Can also cleave the linkage between a glucuronic acid unit and an N-sulfo glucosamine unit carrying a 2-O-sulfo group, but not linkages between a glucuronic acid unit and a 2-O-sulfated iduronic acid moiety. It is essentially inactive at neutral pH but becomes active under acidic conditions such as during tumor invasion and in inflammatory processes. Facilitates cell migration associated with metastasis, wound healing and inflammation. Enhances shedding of syndecans, and increases endothelial invasion and angiogenesis in myelomas. Acts as a procoagulant by increasing the generation of activation factor X in the presence of tissue factor and activation factor VII. Increases cell adhesion to the extracellular matrix (ECM), independent of its enzymatic activity. Induces AKT1/PKB phosphorylation via lipid rafts increasing cell mobility and invasion. Heparin increases this AKT1/PKB activation. Regulates osteogenesis. Enhances angiogenesis through up-regulation of SRC-mediated activation of VEGF. Implicated in hair follicle inner root sheath differentiation and hair homeostasis. The protein is Heparanase (Hpse) of Rattus norvegicus (Rat).